The sequence spans 61 residues: Photosystem II reaction center X protein (61 aa).

The chain crosses the membrane as a helical span at residues 26–46 (IGSFIAAALLIVIPATAFLIF).

The protein belongs to the PsbX family. Type 2 subfamily. In terms of assembly, PSII consists of a core antenna complex that captures photons, and an electron transfer chain that converts photonic excitation into a charge separation. PSII forms dimeric complexes.

It localises to the cellular thylakoid membrane. Its function is as follows. Involved in the binding and/or turnover of quinones at the Q(B) site of Photosystem II. This is Photosystem II reaction center X protein from Prochlorococcus marinus (strain MIT 9215).